A 176-amino-acid chain; its full sequence is 3-hydroxydecanoyl-[acyl-carrier-protein] dehydratase (176 aa).

H75 is a catalytic residue.

Belongs to the thioester dehydratase family. FabA subfamily. In terms of assembly, homodimer.

The protein resides in the cytoplasm. The enzyme catalyses a (3R)-hydroxyacyl-[ACP] = a (2E)-enoyl-[ACP] + H2O. It carries out the reaction (3R)-hydroxydecanoyl-[ACP] = (2E)-decenoyl-[ACP] + H2O. It catalyses the reaction (2E)-decenoyl-[ACP] = (3Z)-decenoyl-[ACP]. The protein operates within lipid metabolism; fatty acid biosynthesis. Necessary for the introduction of cis unsaturation into fatty acids. Catalyzes the dehydration of (3R)-3-hydroxydecanoyl-ACP to E-(2)-decenoyl-ACP and then its isomerization to Z-(3)-decenoyl-ACP. Can catalyze the dehydratase reaction for beta-hydroxyacyl-ACPs with saturated chain lengths up to 16:0, being most active on intermediate chain length. In Actinobacillus pleuropneumoniae serotype 5b (strain L20), this protein is 3-hydroxydecanoyl-[acyl-carrier-protein] dehydratase.